We begin with the raw amino-acid sequence, 496 residues long: Glutamyl-tRNA(Gln) amidotransferase subunit B, organellar chromatophore (496 aa).

The protein belongs to the GatB/GatE family. GatB subfamily. Subunit of the heterotrimeric GatCAB amidotransferase (AdT) complex, composed of A, B and C subunits.

It is found in the plastid. Its subcellular location is the organellar chromatophore. The enzyme catalyses L-glutamyl-tRNA(Gln) + L-glutamine + ATP + H2O = L-glutaminyl-tRNA(Gln) + L-glutamate + ADP + phosphate + H(+). Its function is as follows. Allows the formation of correctly charged Gln-tRNA(Gln) through the transamidation of misacylated Glu-tRNA(Gln). The reaction takes place in the presence of glutamine and ATP through an activated gamma-phospho-Glu-tRNA(Gln). The sequence is that of Glutamyl-tRNA(Gln) amidotransferase subunit B, organellar chromatophore from Paulinella chromatophora.